A 212-amino-acid polypeptide reads, in one-letter code: Large ribosomal subunit protein bL25 (212 aa).

The segment at 181-212 is disordered; sequence LSEPKEEVIEEDVEEVSADVPTVSETEEEDAE. The span at 188–197 shows a compositional bias: acidic residues; it reads VIEEDVEEVS.

This sequence belongs to the bacterial ribosomal protein bL25 family. CTC subfamily. Part of the 50S ribosomal subunit; part of the 5S rRNA/L5/L18/L25 subcomplex. Contacts the 5S rRNA. Binds to the 5S rRNA independently of L5 and L18.

In terms of biological role, this is one of the proteins that binds to the 5S RNA in the ribosome where it forms part of the central protuberance. The protein is Large ribosomal subunit protein bL25 of Finegoldia magna (strain ATCC 29328 / DSM 20472 / WAL 2508) (Peptostreptococcus magnus).